The sequence spans 228 residues: MSNSYSSNAQKKVISTSEWDDKLAEVNISKSDLNKLVMNYLVIEGYQEAAAKFQEESSTQTTVDLASIADRMAIRSAIQCGDVEKGIEIVNDLNPEILDTNPQLYFHLQQQKLIELIRKGMTAEALKFAQDELAPQGEENNKFLEELEKTISLLVFEDTAKSPLSSLLDHSQRQKTAGELNSAILLSQSQDKDPKLPTILKLLKWAQTQLDSKCIYPKITNTVTGEYE.

The LisH domain maps to 29–61; sequence SKSDLNKLVMNYLVIEGYQEAAAKFQEESSTQT. The region spanning 67 to 124 is the CTLH domain; sequence SIADRMAIRSAIQCGDVEKGIEIVNDLNPEILDTNPQLYFHLQQQKLIELIRKGMTAE.

It belongs to the GID8 family.

It localises to the cytoplasm. The protein resides in the nucleus. Functionally, core component of the CTLH E3 ubiquitin-protein ligase complex that mediates ubiquitination and subsequent proteasomal degradation of target proteins. Acts as a positive regulator of Wnt signaling pathway by promoting beta-catenin (CTNNB1) nuclear accumulation. The polypeptide is Glucose-induced degradation protein 8 homolog (Dictyostelium discoideum (Social amoeba)).